The primary structure comprises 137 residues: Large-conductance mechanosensitive channel (137 aa).

2 helical membrane passes run Ala-9–Phe-29 and Ile-79–Ile-99.

This sequence belongs to the MscL family. In terms of assembly, homopentamer.

The protein resides in the cell inner membrane. Channel that opens in response to stretch forces in the membrane lipid bilayer. May participate in the regulation of osmotic pressure changes within the cell. In Pseudomonas paraeruginosa (strain DSM 24068 / PA7) (Pseudomonas aeruginosa (strain PA7)), this protein is Large-conductance mechanosensitive channel.